Here is a 140-residue protein sequence, read N- to C-terminus: Large ribosomal subunit protein uL14 (140 aa).

It belongs to the universal ribosomal protein uL14 family. As to quaternary structure, component of the large ribosomal subunit.

It localises to the cytoplasm. Its function is as follows. Component of the large ribosomal subunit. The ribosome is a large ribonucleoprotein complex responsible for the synthesis of proteins in the cell. This is Large ribosomal subunit protein uL14 (rpl23) from Ictalurus punctatus (Channel catfish).